Consider the following 354-residue polypeptide: Uroporphyrinogen decarboxylase (354 aa).

Residues 27-31, D77, Y154, T209, and H327 each bind substrate; that span reads RQAGR.

It belongs to the uroporphyrinogen decarboxylase family. In terms of assembly, homodimer.

It is found in the cytoplasm. It carries out the reaction uroporphyrinogen III + 4 H(+) = coproporphyrinogen III + 4 CO2. It functions in the pathway porphyrin-containing compound metabolism; protoporphyrin-IX biosynthesis; coproporphyrinogen-III from 5-aminolevulinate: step 4/4. In terms of biological role, catalyzes the decarboxylation of four acetate groups of uroporphyrinogen-III to yield coproporphyrinogen-III. This is Uroporphyrinogen decarboxylase from Salmonella schwarzengrund (strain CVM19633).